The following is a 123-amino-acid chain: Potassium voltage-gated channel subfamily E member 2 (123 aa).

2 N-linked (GlcNAc...) asparagine glycosylation sites follow: Asn6 and Asn29. A helical transmembrane segment spans residues 49 to 69; that stretch reads VILYLMVMIGMFSFIIVAILV. Residues 70–123 lie on the Cytoplasmic side of the membrane; the sequence is STVKSKRREHSNDPYHQYIVEDWQEKYKSQILNLEESKATIHENIGAAGFKMSP.

This sequence belongs to the potassium channel KCNE family. In terms of assembly, interacts with KCNB1. Associates with KCNH2/ERG1. May associate with KCNQ2 and KCNQ3. Associates with HCN1 and probably HCN2. Heteromultimer with KCNC2. Interacts with KCNC2. Interacts with KCNQ1; forms a heterooligomer complex that targets to the membrane raft and leading to currents with an apparently instantaneous activation, a rapid deactivation process and a linear current-voltage relationship and decreases the amplitude of the outward current. Highly expressed in brain, heart, skeletal muscle, pancreas, placenta, kidney, colon and thymus. A small but significant expression is found in liver, ovary, testis, prostate, small intestine and leukocytes. Very low expression, nearly undetectable, in lung and spleen.

It localises to the cell membrane. The protein resides in the apical cell membrane. In terms of biological role, ancillary protein that functions as a regulatory subunit of the voltage-gated potassium (Kv) channel complex composed of pore-forming and potassium-conducting alpha subunits and of regulatory beta subunits. KCNE2 beta subunit modulates the gating kinetics and enhances stability of the channel complex. Alters the gating of the delayed rectifier Kv channel containing KCNB1 alpha subunit. Associates with KCNH2/HERG alpha subunit Kv channel to form the rapidly activating component of the delayed rectifying potassium current (IKr) in heart. May associate with KCNQ2 and/or KCNQ3 alpha subunits to modulate the native M-type current. May associate with HCN1 and HCN2 channel subunits to increase potassium current. Forms a heterooligomer complex with KCNQ1/KVLQT1 alpha subunits which leads to currents with an apparently instantaneous activation, a rapid deactivation process and a linear current-voltage relationship and decreases the amplitude of the outward current. KCNQ1-KCNE2 channel associates with Na(+)-coupled myo-inositol symporter in the apical membrane of choroid plexus epithelium and regulates the myo-inositol gradient between blood and cerebrospinal fluid with an impact on neuron excitability. The sequence is that of Potassium voltage-gated channel subfamily E member 2 from Homo sapiens (Human).